A 289-amino-acid polypeptide reads, in one-letter code: Kinetochore-associated protein MTW1 (289 aa).

Positions 105 to 147 (RLENQKDLVIVDENELKKSEEKLREKVNDVELAFKKNEMLLKR) form a coiled coil.

The protein belongs to the mis12 family. As to quaternary structure, component of the MIND kinetochore complex, which is composed of at least MTW1, NNF1, NSL1 and DSN1.

The protein resides in the chromosome. The protein localises to the centromere. Its subcellular location is the kinetochore. It is found in the cytoplasm. It localises to the cytoskeleton. The protein resides in the spindle pole. Acts as an essential component of the kinetochore MIND complex, which is required for the spindle checkpoint and kinetochore integrity. MIND plays a role in establishing a bipolar spindle-kinetochore interaction by joining kinetochore subunits contacting DNA to those contacting microtubules. The sequence is that of Kinetochore-associated protein MTW1 (MTW1) from Saccharomyces cerevisiae (strain ATCC 204508 / S288c) (Baker's yeast).